A 377-amino-acid polypeptide reads, in one-letter code: NIF3-like protein 1 (377 aa).

N6-acetyllysine is present on Lys109. The segment at 244–377 is mediates interaction with COPS2; that stretch reads LLLHTGMGRL…ETDRDPLQVV (134 aa). Phosphothreonine is present on Thr255. At Ser259 the chain carries Phosphoserine.

It belongs to the GTP cyclohydrolase I type 2/NIF3 family. As to quaternary structure, homodimer. Interacts with COPS2. Interacts with THOC7.

Its subcellular location is the cytoplasm. The protein localises to the nucleus. In terms of biological role, may function as a transcriptional corepressor through its interaction with COPS2, negatively regulating the expression of genes involved in neuronal differentiation. This Homo sapiens (Human) protein is NIF3-like protein 1.